Reading from the N-terminus, the 247-residue chain is Protein FAM133B (247 aa).

Disordered regions lie at residues 19-38 (SRGP…NRPR) and 70-247 (KKEL…PDSP). Positions 70 to 80 (KKELEKHREKL) are enriched in basic and acidic residues. Position 82 is a phosphoserine (Ser-82). The span at 89–102 (KKRQRKKKEKKKSG) shows a compositional bias: basic residues. Low complexity predominate over residues 103 to 119 (RYSSSSSSSSDSSSSSS). A compositionally biased stretch (basic residues) spans 128-140 (QGKRRKKKKNRSH). A compositionally biased stretch (basic and acidic residues) spans 165–176 (KDGTEKEKDIKG). Phosphoserine is present on residues Ser-191, Ser-192, Ser-194, and Ser-196. Over residues 211-221 (SSEEREKATEK) the composition is skewed to basic and acidic residues. Residues 222–239 (TKKKKKHKKHSKKKKKKA) are compositionally biased toward basic residues.

Belongs to the FAM133 family.

In Homo sapiens (Human), this protein is Protein FAM133B (FAM133B).